Consider the following 426-residue polypeptide: Transcription termination factor Rho (426 aa).

In terms of domain architecture, Rho RNA-BD spans 58-131; the sequence is QSLARGYLDI…VRVEAVNGLD (74 aa). Residues 176 to 181, 188 to 193, and arginine 219 each bind ATP; these read GRGQRA and KAGKTT.

It belongs to the Rho family. As to quaternary structure, homohexamer. The homohexamer assembles into an open ring structure.

Facilitates transcription termination by a mechanism that involves Rho binding to the nascent RNA, activation of Rho's RNA-dependent ATPase activity, and release of the mRNA from the DNA template. The chain is Transcription termination factor Rho from Deinococcus radiodurans (strain ATCC 13939 / DSM 20539 / JCM 16871 / CCUG 27074 / LMG 4051 / NBRC 15346 / NCIMB 9279 / VKM B-1422 / R1).